Reading from the N-terminus, the 99-residue chain is MYAIIEVGGKQLLVKEQEVIFTEKIEGNAGEKVEFDKVLLFGDKVGRPYLEKVKVIGEIQKQSKHKKIIVYRHNAKSTHKRKLGHRQPYTRVKILEIKG.

It belongs to the bacterial ribosomal protein bL21 family. As to quaternary structure, part of the 50S ribosomal subunit. Contacts protein L20.

Its function is as follows. This protein binds to 23S rRNA in the presence of protein L20. The sequence is that of Large ribosomal subunit protein bL21 from Mycoplasmopsis pulmonis (strain UAB CTIP) (Mycoplasma pulmonis).